The primary structure comprises 180 residues: Small ribosomal subunit protein uS4 (180 aa).

In terms of domain architecture, S4 RNA-binding spans 103–174 (RRLQTIVYKK…HPERMMIEKA (72 aa)).

It belongs to the universal ribosomal protein uS4 family. Part of the 30S ribosomal subunit. Contacts protein S5. The interaction surface between S4 and S5 is involved in control of translational fidelity.

Functionally, one of the primary rRNA binding proteins, it binds directly to 16S rRNA where it nucleates assembly of the body of the 30S subunit. With S5 and S12 plays an important role in translational accuracy. This Pyrococcus abyssi (strain GE5 / Orsay) protein is Small ribosomal subunit protein uS4.